Here is an 84-residue protein sequence, read N- to C-terminus: Cell division topological specificity factor (84 aa).

Belongs to the MinE family.

In terms of biological role, prevents the cell division inhibition by proteins MinC and MinD at internal division sites while permitting inhibition at polar sites. This ensures cell division at the proper site by restricting the formation of a division septum at the midpoint of the long axis of the cell. In Pseudomonas fluorescens (strain Pf0-1), this protein is Cell division topological specificity factor.